Here is a 181-residue protein sequence, read N- to C-terminus: Adenylate kinase (181 aa).

Position 10 to 15 (10 to 15 (GAGKGT)) interacts with ATP. The interval 30-59 (STGELFRKNIQDGTKLGVEAKRYLDAGDLV) is NMP. Residues threonine 31, arginine 36, 57–59 (DLV), 85–88 (GYPR), and glutamine 92 contribute to the AMP site. Residues 126–132 (GRGRADD) are LID. Arginine 127 lines the ATP pocket. AMP contacts are provided by arginine 129 and arginine 140. An ATP-binding site is contributed by glycine 166.

Belongs to the adenylate kinase family. As to quaternary structure, monomer.

The protein resides in the cytoplasm. The catalysed reaction is AMP + ATP = 2 ADP. Its pathway is purine metabolism; AMP biosynthesis via salvage pathway; AMP from ADP: step 1/1. In terms of biological role, catalyzes the reversible transfer of the terminal phosphate group between ATP and AMP. Plays an important role in cellular energy homeostasis and in adenine nucleotide metabolism. In Mycobacterium ulcerans (strain Agy99), this protein is Adenylate kinase.